The chain runs to 96 residues: UPF0235 protein VV2877 (96 aa).

Belongs to the UPF0235 family.

This is UPF0235 protein VV2877 from Vibrio vulnificus (strain YJ016).